Reading from the N-terminus, the 204-residue chain is Probable nicotinate-nucleotide adenylyltransferase (204 aa).

This sequence belongs to the NadD family.

It catalyses the reaction nicotinate beta-D-ribonucleotide + ATP + H(+) = deamido-NAD(+) + diphosphate. It functions in the pathway cofactor biosynthesis; NAD(+) biosynthesis; deamido-NAD(+) from nicotinate D-ribonucleotide: step 1/1. In terms of biological role, catalyzes the reversible adenylation of nicotinate mononucleotide (NaMN) to nicotinic acid adenine dinucleotide (NaAD). This Dehalococcoides mccartyi (strain ATCC BAA-2100 / JCM 16839 / KCTC 5957 / BAV1) protein is Probable nicotinate-nucleotide adenylyltransferase.